Consider the following 245-residue polypeptide: 2,3,4,5-tetrahydropyridine-2,6-dicarboxylate N-acetyltransferase (245 aa).

Belongs to the transferase hexapeptide repeat family. DapH subfamily.

The catalysed reaction is (S)-2,3,4,5-tetrahydrodipicolinate + acetyl-CoA + H2O = L-2-acetamido-6-oxoheptanedioate + CoA. It functions in the pathway amino-acid biosynthesis; L-lysine biosynthesis via DAP pathway; LL-2,6-diaminopimelate from (S)-tetrahydrodipicolinate (acetylase route): step 1/3. In terms of biological role, catalyzes the transfer of an acetyl group from acetyl-CoA to tetrahydrodipicolinate. In Methanopyrus kandleri (strain AV19 / DSM 6324 / JCM 9639 / NBRC 100938), this protein is 2,3,4,5-tetrahydropyridine-2,6-dicarboxylate N-acetyltransferase.